Reading from the N-terminus, the 479-residue chain is Ribulose bisphosphate carboxylase large chain (479 aa).

A propeptide spanning residues 1–2 (MS) is cleaved from the precursor. Residues Asn123 and Thr173 each coordinate substrate. The Proton acceptor role is filled by Lys175. Residue Lys177 coordinates substrate. Mg(2+)-binding residues include Lys201, Asp203, and Glu204. At Lys201 the chain carries N6-carboxylysine. Residue Ser208 is modified to Phosphoserine. The Proton acceptor role is filled by His294. Substrate-binding residues include Arg295 and His327. Thr330 bears the Phosphothreonine mark. Ser379 serves as a coordination point for substrate.

Belongs to the RuBisCO large chain family. Type I subfamily. In terms of assembly, heterohexadecamer of 8 large chains and 8 small chains; disulfide-linked. The disulfide link is formed within the large subunit homodimers. Mg(2+) serves as cofactor. The disulfide bond which can form in the large chain dimeric partners within the hexadecamer appears to be associated with oxidative stress and protein turnover.

The protein localises to the plastid. It is found in the chloroplast. It catalyses the reaction 2 (2R)-3-phosphoglycerate + 2 H(+) = D-ribulose 1,5-bisphosphate + CO2 + H2O. The catalysed reaction is D-ribulose 1,5-bisphosphate + O2 = 2-phosphoglycolate + (2R)-3-phosphoglycerate + 2 H(+). In terms of biological role, ruBisCO catalyzes two reactions: the carboxylation of D-ribulose 1,5-bisphosphate, the primary event in carbon dioxide fixation, as well as the oxidative fragmentation of the pentose substrate in the photorespiration process. Both reactions occur simultaneously and in competition at the same active site. This is Ribulose bisphosphate carboxylase large chain from Olimarabidopsis pumila (Dwarf rocket).